A 430-amino-acid polypeptide reads, in one-letter code: Tol-Pal system protein TolB (430 aa).

A signal peptide spans 1 to 21 (MKQALRVAFGFLILWASVLHA).

Belongs to the TolB family. In terms of assembly, the Tol-Pal system is composed of five core proteins: the inner membrane proteins TolA, TolQ and TolR, the periplasmic protein TolB and the outer membrane protein Pal. They form a network linking the inner and outer membranes and the peptidoglycan layer.

It is found in the periplasm. Its function is as follows. Part of the Tol-Pal system, which plays a role in outer membrane invagination during cell division and is important for maintaining outer membrane integrity. TolB occupies a key intermediary position in the Tol-Pal system because it communicates directly with both membrane-embedded components, Pal in the outer membrane and TolA in the inner membrane. This is Tol-Pal system protein TolB from Shigella flexneri.